Reading from the N-terminus, the 162-residue chain is Phosphopantetheine adenylyltransferase (162 aa).

A substrate-binding site is contributed by Ser-11. Residues 11 to 12 and His-19 contribute to the ATP site; that span reads SF. Substrate contacts are provided by Lys-43, Val-76, and Arg-90. ATP contacts are provided by residues 91–93, Glu-101, and 126–132; these read GLR and HLYISSS.

Belongs to the bacterial CoaD family. In terms of assembly, homohexamer. It depends on Mg(2+) as a cofactor.

It localises to the cytoplasm. The enzyme catalyses (R)-4'-phosphopantetheine + ATP + H(+) = 3'-dephospho-CoA + diphosphate. It participates in cofactor biosynthesis; coenzyme A biosynthesis; CoA from (R)-pantothenate: step 4/5. In terms of biological role, reversibly transfers an adenylyl group from ATP to 4'-phosphopantetheine, yielding dephospho-CoA (dPCoA) and pyrophosphate. The sequence is that of Phosphopantetheine adenylyltransferase from Streptococcus pneumoniae (strain Hungary19A-6).